The sequence spans 388 residues: P2X purinoceptor 4 (388 aa).

At 1–33 (MAGCCSVLGSFLFEYDTPRIVLIRSRKVGLMNR) the chain is on the cytoplasmic side. A helical membrane pass occupies residues 34-54 (VVQLLILAYVIGWVFVWEKGY). Residues 55–338 (QETDSVVSSV…KFDIIPTMIN (284 aa)) are Extracellular-facing. Residues Lys67 and Lys69 each contribute to the ATP site. CTP is bound by residues Lys67 and Lys69. 5 N-linked (GlcNAc...) asparagine glycosylation sites follow: Asn75, Asn110, Asn131, Asn153, and Asn184. 3 disulfides stabilise this stretch: Cys116/Cys165, Cys126/Cys149, and Cys132/Cys159. ATP is bound by residues Thr186 and Leu188. Thr186 is a binding site for CTP. N-linked (GlcNAc...) asparagine glycans are attached at residues Asn199 and Asn208. 2 cysteine pairs are disulfide-bonded: Cys217-Cys227 and Cys261-Cys270. The ATP site is built by Asn293, Arg295, and Lys313. The CTP site is built by Asn293, Arg295, and Lys313. A helical transmembrane segment spans residues 339 to 359 (VGSGLALLGVATVLCDVIVLY). Over 360-388 (CMKKRYYYRDKKYKYVEDYEQGLSGEMNQ) the chain is Cytoplasmic.

The protein belongs to the P2X receptor family. Functional P2RXs are organized as homomeric and heteromeric trimers. Functional P2XRs are organized as homomeric and heteromeric trimers. Forms heterotrimer with P2RX1. Interacts with P2RX7 (via C-terminus); this interaction is functional only in the presence of ATP. Forms heterotrimer with P2RX4; functional differences between homomeric P2RX4 and P2RX4/6 heterotrimer are minor. Interacts with AP1M2.

The protein resides in the cell membrane. It localises to the lysosome membrane. It catalyses the reaction K(+)(in) = K(+)(out). The catalysed reaction is Na(+)(in) = Na(+)(out). The enzyme catalyses Ca(2+)(in) = Ca(2+)(out). Activated by ATP. pH-dependent and inhibited by acidic pH. Functionally, ATP-gated nonselective transmembrane cation channel permeable to potassium, sodium and calcium. CTP, but not GTP or UTP, functions as a weak affinity agonist for P2RX4. Activated by extracellularly released ATP, it plays multiple role in immunity and central nervous system physiology. Plays a key role in initial steps of T-cell activation and Ca(2+) microdomain formation. Also participates in basal T-cell activity without TCR/CD3 stimulation. Promotes the differentiation and activation of Th17 cells via expression of retinoic acid-related orphan receptor C/RORC. Upon activation, drives microglia motility via the PI3K/Akt pathway. Could also function as an ATP-gated cation channel of lysosomal membranes. The chain is P2X purinoceptor 4 (P2rx4) from Mus musculus (Mouse).